The following is a 593-amino-acid chain: Aspartate--tRNA ligase (593 aa).

L-aspartate is bound at residue Glu-181. The interval 205–208 (QLYK) is aspartate. Arg-227 contacts L-aspartate. Residues 227–229 (RDE) and Gln-236 contribute to the ATP site. His-455 contributes to the L-aspartate binding site. Glu-489 lines the ATP pocket. Arg-496 contributes to the L-aspartate binding site. Residue 541–544 (GLDR) coordinates ATP.

Belongs to the class-II aminoacyl-tRNA synthetase family. Type 1 subfamily. In terms of assembly, homodimer.

The protein localises to the cytoplasm. The enzyme catalyses tRNA(Asp) + L-aspartate + ATP = L-aspartyl-tRNA(Asp) + AMP + diphosphate. Catalyzes the attachment of L-aspartate to tRNA(Asp) in a two-step reaction: L-aspartate is first activated by ATP to form Asp-AMP and then transferred to the acceptor end of tRNA(Asp). This chain is Aspartate--tRNA ligase, found in Ruminiclostridium cellulolyticum (strain ATCC 35319 / DSM 5812 / JCM 6584 / H10) (Clostridium cellulolyticum).